Consider the following 233-residue polypeptide: Glyceraldehyde-3-phosphate dehydrogenase A, chloroplastic (233 aa).

D-glyceraldehyde 3-phosphate is bound by residues 49–51 (SCT), Thr-80, Arg-95, 108–109 (TG), and Arg-131. The active-site Nucleophile is Cys-50. NADP(+) is bound at residue Asn-213.

The protein belongs to the glyceraldehyde-3-phosphate dehydrogenase family. As to quaternary structure, tetramer of either four A chains (GAPDH 2) or two A and two B chains (GAPDH 1).

Its subcellular location is the plastid. It is found in the chloroplast. The enzyme catalyses D-glyceraldehyde 3-phosphate + phosphate + NADP(+) = (2R)-3-phospho-glyceroyl phosphate + NADPH + H(+). The protein operates within carbohydrate biosynthesis; Calvin cycle. In Sinapis alba (White mustard), this protein is Glyceraldehyde-3-phosphate dehydrogenase A, chloroplastic (GAPA).